Reading from the N-terminus, the 141-residue chain is Large-conductance mechanosensitive channel (141 aa).

3 consecutive transmembrane segments (helical) span residues 14–34 (VMDLAVGVIIGGAFGGIVKSL), 38–58 (IIMPIVGAIFGGFDFSNYFLG), and 81–101 (GSFITVLINFLILAWIIFLMV).

The protein belongs to the MscL family. As to quaternary structure, homopentamer.

It is found in the cell inner membrane. Functionally, channel that opens in response to stretch forces in the membrane lipid bilayer. May participate in the regulation of osmotic pressure changes within the cell. This is Large-conductance mechanosensitive channel from Rhizobium rhizogenes (strain K84 / ATCC BAA-868) (Agrobacterium radiobacter).